The following is a 399-amino-acid chain: Tyrosine--tRNA ligase (399 aa).

The 'HIGH' region signature appears at Pro42–His51. The 'KMSKS' region motif lies at Lys226–Ser230. Residue Lys229 participates in ATP binding. The S4 RNA-binding domain occupies Met336–Leu396.

It belongs to the class-I aminoacyl-tRNA synthetase family. TyrS type 2 subfamily. As to quaternary structure, homodimer.

The protein localises to the cytoplasm. It catalyses the reaction tRNA(Tyr) + L-tyrosine + ATP = L-tyrosyl-tRNA(Tyr) + AMP + diphosphate + H(+). Catalyzes the attachment of tyrosine to tRNA(Tyr) in a two-step reaction: tyrosine is first activated by ATP to form Tyr-AMP and then transferred to the acceptor end of tRNA(Tyr). The sequence is that of Tyrosine--tRNA ligase from Pseudomonas fluorescens (strain ATCC BAA-477 / NRRL B-23932 / Pf-5).